The following is a 329-amino-acid chain: Malate dehydrogenase (329 aa).

13-19 contributes to the NAD(+) binding site; that stretch reads GAAGNIS. Positions 94 and 100 each coordinate substrate. NAD(+) is bound by residues Asn107, Gln114, and 131–133; that span reads VGN. The substrate site is built by Asn133 and Arg164. His189 serves as the catalytic Proton acceptor.

The protein belongs to the LDH/MDH superfamily. MDH type 2 family.

The catalysed reaction is (S)-malate + NAD(+) = oxaloacetate + NADH + H(+). Functionally, catalyzes the reversible oxidation of malate to oxaloacetate. This chain is Malate dehydrogenase, found in Psychrobacter cryohalolentis (strain ATCC BAA-1226 / DSM 17306 / VKM B-2378 / K5).